Reading from the N-terminus, the 210-residue chain is uncharacterized protein (210 aa).

2 disordered regions span residues 1–21 (MHRL…TDAI) and 168–210 (EALQ…STAQ). Residues 21–175 (IDSLDKRSDS…ELEALQQESS (155 aa)) are a coiled coil. The segment covering 174 to 184 (SSWLGDQSTAE) has biased composition (polar residues).

Belongs to the SNF7 family.

This is an uncharacterized protein from Schizosaccharomyces pombe (strain 972 / ATCC 24843) (Fission yeast).